A 551-amino-acid chain; its full sequence is Putative ABC transporter ATP-binding protein BT9727_3105 (551 aa).

ABC transporter domains lie at 5–243 (AEIN…FRPF) and 293–525 (LSAE…SINR). ATP-binding positions include 39–46 (GGSGSGKT) and 327–334 (GKNGTGKS).

It belongs to the ABC transporter superfamily.

The protein resides in the cell membrane. In terms of biological role, probably part of an ABC transporter complex. Responsible for energy coupling to the transport system. The chain is Putative ABC transporter ATP-binding protein BT9727_3105 from Bacillus thuringiensis subsp. konkukian (strain 97-27).